The primary structure comprises 393 residues: MTNSNRIKLTWISFLSYALTGALVIVTGMVMGNIADYFHLPVSSMSNTFTFLNAGILISIFLNAWLMEIIPLKTQLRFGFILMVLAVAGLMFSHSLALFSAAMFVLGLVSGITMSIGTFLITQLYEGRQRGSRLLFTDSFFSMAGMIFPMVAAFLLARSIEWYWVYACIGLVYLAIFILTFGCEFPALGKHAQHSQAPVVKEKWGIGVLFLAVAALCYILGQLGFISWVPEYAKGLGMSLNDAGALVSDFWMSYMFGMWAFSFILRFFDLQRILTVLAGMAAVLMYLFITGTQAHMPWFILTLGFFSSAIYTSIITLGSQQTKVASPKLVNFILTCGTIGTMLTFVVTGPIVAHSGPQAALLTANGLYAVVFVMCFALGFVSRHRQHSSPAAH.

A run of 12 helical transmembrane segments spans residues 11 to 31, 51 to 71, 78 to 98, 101 to 121, 134 to 154, 162 to 182, 206 to 226, 245 to 265, 273 to 293, 298 to 318, 332 to 352, and 361 to 381; these read WISFLSYALTGALVIVTGMVM, FLNAGILISIFLNAWLMEIIP, FGFILMVLAVAGLMFSHSLAL, AAMFVLGLVSGITMSIGTFLI, LLFTDSFFSMAGMIFPMVAAF, WYWVYACIGLVYLAIFILTFG, IGVLFLAVAALCYILGQLGFI, ALVSDFWMSYMFGMWAFSFIL, ILTVLAGMAAVLMYLFITGTQ, WFILTLGFFSSAIYTSIITLG, FILTCGTIGTMLTFVVTGPIV, and LLTANGLYAVVFVMCFALGFV.

The protein belongs to the major facilitator superfamily. TsgA family.

The protein localises to the cell inner membrane. This chain is Protein TsgA, found in Salmonella paratyphi B (strain ATCC BAA-1250 / SPB7).